Consider the following 394-residue polypeptide: MLKQIQKFLKLEAASGILLLVSALLAMIFANTDLNQLYFSFLQTEVAIKFGAFSIDKPLLMWVNDGFMAVFFILVGMEVKRELFEGSLSSYQKAIFPAVAALGGMIIPALVYWFINQNSPEYQQGWAIPMATDIAFALGIVALLSKQVPPALKVFLLALAIIDDLGAIIVIALFFSHEMSMQALTIASIAIVILVAMNRYKVTGLINYAIIGTILWASVLKSGVHATLAGVVIGFCIPLRGKNGEAPLHHLEHALAPWCSFAILPLFAFSNAGVSLEGMSLDKLASPLPLGVALGLIIGKPVGVFLFSYVAVLLGIAKVPEGINLKQIFAIAVLCGIGFTMSMFIAGLAFGEEDASESVLALARLGILMGTFVAAIIGYFLLKITTKPSLMKAA.

The next 11 helical transmembrane spans lie at Leu-11–Asn-31, Leu-59–Val-79, Ile-95–Ile-115, Gly-125–Ser-145, Phe-155–Phe-175, His-177–Met-197, Thr-203–Leu-220, Ala-254–Val-274, Leu-296–Ile-316, Ile-328–Leu-348, and Leu-365–Thr-385.

It belongs to the NhaA Na(+)/H(+) (TC 2.A.33) antiporter family.

It is found in the cell inner membrane. The enzyme catalyses Na(+)(in) + 2 H(+)(out) = Na(+)(out) + 2 H(+)(in). Its function is as follows. Na(+)/H(+) antiporter that extrudes sodium in exchange for external protons. The protein is Na(+)/H(+) antiporter NhaA of Actinobacillus pleuropneumoniae serotype 7 (strain AP76).